The chain runs to 192 residues: Rho-related protein racC (192 aa).

13-20 (GDGAVGKT) provides a ligand contact to GTP. The Effector region signature appears at 35-43 (YIPTVFDNY). GTP-binding positions include 60-64 (DTAGQ) and 118-121 (TKLD). Residue Cys-189 is modified to Cysteine methyl ester. Cys-189 is lipidated: S-geranylgeranyl cysteine. Residues 190–192 (IVM) constitute a propeptide, removed in mature form.

This sequence belongs to the small GTPase superfamily. Rho family. In terms of assembly, interacts with pakB.

Its subcellular location is the cell membrane. The protein is Rho-related protein racC (racC) of Dictyostelium discoideum (Social amoeba).